The chain runs to 374 residues: DNA replication and repair protein RecF (374 aa).

30–37 lines the ATP pocket; sequence GPNAQGKT.

This sequence belongs to the RecF family.

It is found in the cytoplasm. Its function is as follows. The RecF protein is involved in DNA metabolism; it is required for DNA replication and normal SOS inducibility. RecF binds preferentially to single-stranded, linear DNA. It also seems to bind ATP. This Lactobacillus johnsonii (strain CNCM I-12250 / La1 / NCC 533) protein is DNA replication and repair protein RecF.